A 1060-amino-acid polypeptide reads, in one-letter code: Bumetanide-sensitive sodium-(potassium)-chloride cotransporter (1060 aa).

Over 1–122 (MNDENRFNVS…KSPTPAVGIK (122 aa)) the chain is Cytoplasmic. A run of 2 helical transmembrane segments spans residues 123 to 143 (LGWIQGVFIPCLLNIWGVMLF) and 154 to 174 (GIGLSLVIIAISAIVCVITTL). Over 175–197 (SMSAICTNGEVKGGGIYYIISRS) the chain is Cytoplasmic. 2 helical membrane-spanning segments follow: residues 198–218 (LGPEFGASVGIIFAFANAVAA) and 250–270 (IVGTVALLVMCIICAIGMDWE). Topologically, residues 271-275 (SKAQN) are cytoplasmic. 2 consecutive transmembrane segments (helical) span residues 276–296 (FLIAIIVGAMVDFVVGTIMGP) and 332–352 (FFSVFAIFFPSVTGIQAGANI). Residues 353-367 (SGDLKDPASAIPKGT) are Cytoplasmic-facing. Residues 368–388 (LLALLISMVSYTLMVLFAGGG) traverse the membrane as a helical segment. N-linked (GlcNAc...) asparagine glycans are attached at residues N396, N404, and N419. The chain crosses the membrane as a helical span at residues 432 to 452 (VMQLMSAWGPFIYGGCWAATL). The Cytoplasmic portion of the chain corresponds to 453–497 (STALTNLLSVPRLIQALGVDRIYPGLIFFSKPYGRHGEPYRGYVL). 2 consecutive transmembrane segments (helical) span residues 498-518 (TFFVSLLFLLIADLNTIAPLI) and 563-583 (CVAIMLLVHWVMSLVTFAIFF). Residues 584-642 (TLYLIVHYRRPDVNWGSSTQAQMYKTALSSAHALARTGEHVKNYWPQLLVLAGRPQARP) are Cytoplasmic-facing. The chain crosses the membrane as a helical span at residues 643 to 663 (ALVDLGNLISKAGSLMIVGDI). N-linked (GlcNAc...) asparagine glycosylation is present at N816. The helical transmembrane segment at 882–902 (TLDVWWLYDDGGLTILLPYII) threads the bilayer. Topologically, residues 903 to 1060 (SQRSAWANCK…NHTSVLTFYS (158 aa)) are cytoplasmic.

Belongs to the SLC12A transporter family.

The protein resides in the membrane. Functionally, electrically silent transporter system. Mediates sodium and chloride reabsorption. Plays a vital role in the regulation of ionic balance and cell volume. The polypeptide is Bumetanide-sensitive sodium-(potassium)-chloride cotransporter (Manduca sexta (Tobacco hawkmoth)).